The following is a 654-amino-acid chain: Endoplasmic reticulum chaperone BiP (654 aa).

An N-terminal signal peptide occupies residues 1-18 (MKFPMVAAALLLLCAVRA). Residues 1–80 (MKFPMVAAAL…EGERLIGDAA (80 aa)) form a required for interaction with ELAPOR1 region. 36 to 39 (GTTY) is an ATP binding site. Phosphoserine is present on Ser86. ATP is bound at residue Lys96. Residue Lys125 is modified to N6-acetyllysine. Residues 125 to 280 (KPYIQVDIGG…KKKTGKDVRK (156 aa)) are nucleotide-binding (NBD). The residue at position 160 (Tyr160) is a 3'-nitrotyrosine. Lys213 bears the N6-acetyllysine mark. 227–229 (GGT) is a binding site for ATP. N6-acetyllysine is present on Lys271. 293–300 (EKAKRALS) is an ATP binding site. Residue Lys326 is modified to N6-acetyllysine. Lys352 is covalently cross-linked (Glycyl lysine isopeptide (Lys-Gly) (interchain with G-Cter in SUMO2)). Lys353 is modified (N6-acetyllysine; alternate). A Glycyl lysine isopeptide (Lys-Gly) (interchain with G-Cter in SUMO1); alternate cross-link involves residue Lys353. 364 to 367 (GSTR) provides a ligand contact to ATP. The interval 409-419 (QDTGDLVLLDV) is interdomain linker. Residues 420–500 (CPLTLGIETV…PRGVPQIEVT (81 aa)) are substrate-binding (SBD). Lys447 carries the post-translational modification N6-succinyllysine. Arg492 carries the post-translational modification Omega-N-methylarginine. Thr518 is subject to O-AMP-threonine; alternate. Thr518 is modified (phosphothreonine; alternate). Lys585 carries the post-translational modification N6,N6,N6-trimethyllysine; by METTL21A; in vitro. N6,N6-dimethyllysine; alternate is present on Lys585. N6-methyllysine; alternate is present on Lys585. An N6-methyllysine modification is found at Lys591. The segment at 632 to 654 (SKLYGSAGPPPTGEEDTSEKDEL) is disordered. A phosphothreonine mark is found at Thr643 and Thr648. Over residues 644 to 654 (GEEDTSEKDEL) the composition is skewed to acidic residues. Ser649 is modified (phosphoserine). Residues 651–654 (KDEL) carry the Prevents secretion from ER motif.

It belongs to the heat shock protein 70 family. As to quaternary structure, monomer and homooligomer; homooligomerization via the interdomain linker inactivates the chaperone activity and acts as a storage of HSPA5/BiP molecules. Interacts with DNAJC1 (via J domain). Component of an EIF2 complex at least composed of CELF1/CUGBP1, CALR, CALR3, EIF2S1, EIF2S2, HSP90B1 and HSPA5. Part of a large chaperone multiprotein complex comprising DNAJB11, HSP90B1, HSPA5, HYOU, PDIA2, PDIA4, PDIA6, PPIB, SDF2L1, UGGT1 and very small amounts of ERP29, but not, or at very low levels, CALR nor CANX. Interacts with TMEM132A and TRIM21. May form a complex with ERLEC1, OS9, SEL1L and SYVN1. Interacts with DNAJC10. Interacts with DNAJB9/ERdj4; leading to recruit HSPA5/BiP to ERN1/IRE1. Interacts with ERN1/IRE1 (via luminal domain); the interaction takes place following interaction with DNAJB9/ERdj4 and leads to inactivate ERN1/IRE1, the interaction also competitively inhibits ERN1 interaction with MANF. Interacts directly with MANF (via SAP domain); the interaction inhibits ATP binding to HSPA5/BiP and subsequent nucleotide exchange. Interacts with EIF2AK3/PERK (via luminal domain); interaction leads to inactivate EIF2AK3/PERK. Interacts with MX1. Interacts with METTL23. Interacts with CEMIP; the interaction induces calcium leakage from the endoplasmic reticulum and cell migration. Interacts with PCSK4 form; the interaction takes place in the endoplasmic reticulum. Interacts with CIPC. Interacts with CCDC88B (via C-terminus); the interaction opposes ERN1-mediated JNK activation, protecting against apoptosis. Interacts with INPP5K; necessary for INPP5K localization at the endoplasmic reticulum. Interacts with LOXL2; leading to activate the ERN1/IRE1-XBP1 pathway of the unfolded protein response. Interacts with CLU under stressed condition; interaction increases CLU protein stability; facilitates its retrotranslocation and redistribution to the mitochondria; cooperatively suppress stress-induced apoptosis by stabilizing mitochondrial membrane integrity. Interacts with CCDC47. Interacts with CLN3. Interacts with ELAPOR1; may regulate the function of HSPA5 in apoptosis and cell proliferation. Interacts with CASP7. Interacts with ILDR2; the interaction stabilizes ILDR2 expression. Interacts with ADAM7. In terms of processing, in unstressed cells, AMPylation at Thr-518 by FICD inactivates the chaperome activity: AMPylated form is locked in a relatively inert state and only weakly stimulated by J domain-containing proteins. In response to endoplasmic reticulum stress, de-AMPylation by the same protein, FICD, restores the chaperone activity.

The protein resides in the endoplasmic reticulum lumen. It is found in the melanosome. Its subcellular location is the cytoplasm. It localises to the cell surface. The catalysed reaction is ATP + H2O = ADP + phosphate + H(+). With respect to regulation, the chaperone activity is regulated by ATP-induced allosteric coupling of the nucleotide-binding (NBD) and substrate-binding (SBD) domains. In the ADP-bound and nucleotide-free (apo) states, the two domains have little interaction. In contrast, in the ATP-bound state the two domains are tightly coupled, which results in drastically accelerated kinetics in both binding and release of polypeptide substrates. J domain-containing co-chaperones (DNAJB9/ERdj4 or DNAJC10/ERdj5) stimulate the ATPase activity and are required for efficient substrate recognition by HSPA5/BiP. Homooligomerization inactivates participating HSPA5/BiP protomers and probably act as reservoirs to store HSPA5/BiP molecules when they are not needed by the cell. In terms of biological role, endoplasmic reticulum chaperone that plays a key role in protein folding and quality control in the endoplasmic reticulum lumen. Involved in the correct folding of proteins and degradation of misfolded proteins via its interaction with DNAJC10/ERdj5, probably to facilitate the release of DNAJC10/ERdj5 from its substrate. Acts as a key repressor of the EIF2AK3/PERK and ERN1/IRE1-mediated unfolded protein response (UPR). In the unstressed endoplasmic reticulum, recruited by DNAJB9/ERdj4 to the luminal region of ERN1/IRE1, leading to disrupt the dimerization of ERN1/IRE1, thereby inactivating ERN1/IRE1. Also binds and inactivates EIF2AK3/PERK in unstressed cells. Accumulation of misfolded protein in the endoplasmic reticulum causes release of HSPA5/BiP from ERN1/IRE1 and EIF2AK3/PERK, allowing their homodimerization and subsequent activation. Plays an auxiliary role in post-translational transport of small presecretory proteins across endoplasmic reticulum (ER). May function as an allosteric modulator for SEC61 channel-forming translocon complex, likely cooperating with SEC62 to enable the productive insertion of these precursors into SEC61 channel. Appears to specifically regulate translocation of precursors having inhibitory residues in their mature region that weaken channel gating. May also play a role in apoptosis and cell proliferation. The polypeptide is Endoplasmic reticulum chaperone BiP (Cricetulus griseus (Chinese hamster)).